The sequence spans 461 residues: Complement C1r subcomponent-like protein (461 aa).

The first 22 residues, methionine 1–alanine 22, serve as a signal peptide directing secretion. Positions glutamine 23–alanine 139 constitute a CUB domain. Cystine bridges form between cysteine 71–cysteine 89 and cysteine 164–cysteine 197. The 62-residue stretch at alanine 138–proline 199 folds into the Sushi domain. The Peptidase S1 domain occupies threonine 214–glutamate 453. The active-site Charge relay system is the histidine 252. Asparagine 265 carries an N-linked (GlcNAc...) asparagine glycan. Catalysis depends on aspartate 308, which acts as the Charge relay system. Asparagine 332 is a glycosylation site (N-linked (GlcNAc...) asparagine). 2 disulfide bridges follow: cysteine 371-cysteine 390 and cysteine 401-cysteine 431. Serine 405 serves as the catalytic Charge relay system.

Belongs to the peptidase S1 family.

Its subcellular location is the secreted. Its function is as follows. Mediates the proteolytic cleavage of HP/haptoglobin in the endoplasmic reticulum. The polypeptide is Complement C1r subcomponent-like protein (C1rl) (Rattus norvegicus (Rat)).